A 214-amino-acid polypeptide reads, in one-letter code: Glycine-rich protein 2 (214 aa).

The CSD domain maps to Arg8–Pro75. Residues Thr54–Gly91 are disordered. The segment covering Val80–Gly91 has biased composition (gly residues). 2 consecutive CCHC-type zinc fingers follow at residues Ser157–Gln174 and Gly194–Ser211.

The chain is Glycine-rich protein 2 (GRP-2) from Nicotiana sylvestris (Wood tobacco).